The following is a 145-amino-acid chain: Cystatin-like 1 (145 aa).

An N-terminal signal peptide occupies residues 1 to 19; the sequence is MGIGCWRNPLLLLIALVLS. Residues 37 to 115 form the Cystatin domain; that stretch reads SKKNMNSTLN…KKLRKSLICE (79 aa). A glycan (N-linked (GlcNAc...) asparagine) is linked at Asn42. Disulfide bonds link Cys91/Cys101 and Cys114/Cys134.

This sequence belongs to the cystatin family.

It localises to the secreted. The polypeptide is Cystatin-like 1 (CSTL1) (Homo sapiens (Human)).